Here is a 624-residue protein sequence, read N- to C-terminus: Kelch-like ECH-associated protein 1 (624 aa).

Cysteine 38 is subject to S-(2-succinyl)cysteine. The region spanning 77–149 is the BTB domain; it reads CDVTLQVKYQ…AYTASISMGE (73 aa). An N5-[4-(S-L-cysteinyl)-5-methyl-1H-imidazol-2-yl]-L-ornithine (Arg-Cys) (interchain with C-151 in KEAP1) cross-link involves residue arginine 135. Cysteine 151 carries the S-(2,3-dicarboxypropyl)cysteine; alternate modification. At cysteine 151 the chain carries S-(2-succinyl)cysteine; alternate. Cysteine 151 carries the post-translational modification S-nitrosocysteine; alternate. Residue cysteine 151 forms an N5-[4-(S-L-cysteinyl)-5-methyl-1H-imidazol-2-yl]-L-ornithine (Cys-Arg) (interchain with R-135 in KEAP1) linkage. In terms of domain architecture, BACK spans 184 to 286; that stretch reads AIGIANFAEQ…TPNFLQMQLQ (103 aa). Cysteine 241 is modified (S-(2-succinyl)cysteine). Cysteine 257 and cysteine 273 each carry S-(2,3-dicarboxypropyl)cysteine. Cysteine 288 bears the S-(2,3-dicarboxypropyl)cysteine; alternate mark. Cysteine 288 bears the S-(2-succinyl)cysteine; alternate mark. Cysteine 319 is modified (S-(2-succinyl)cysteine). Kelch repeat units lie at residues 327-372, 373-423, 424-470, 471-517, 518-564, and 565-611; these read LIYT…VVGG, LLYA…VIDG, HIYA…VLNR, LLYA…VLHN, CIYA…VHQG, and RIYV…VTME. Position 434 is an S-cGMP-cysteine (cysteine 434). Residue cysteine 613 is modified to S-(2-succinyl)cysteine.

Belongs to the KEAP1 family. Component of the BCR(KEAP1) E3 ubiquitin ligase complex, at least composed of 2 molecules of CUL3, 2 molecules of KEAP1, and RBX1. Interacts with NFE2L2/NRF2; the interaction is direct. Forms a ternary complex with NFE2L2/NRF2 and PGAM5. Interacts with (phosphorylated) SQSTM1/p62; the interaction is direct and inactivates the BCR(KEAP1) complex by sequestering it in inclusion bodies, promoting its degradation. Interacts with NFE2L1. Interacts with BPTF and PTMA. Interacts with MAP1LC3B. Interacts indirectly with ENC1. Interacts with SESN1 and SESN2. Interacts with HSP90AA1 and HSP90AB1. Interacts with PGCKA1; this interaction prevents the ubiquitination of KEAP1 by TRIM25, thus protecting KEAP1 from degradation. As to quaternary structure, (Microbial infection) Interacts with ebolavirus protein VP24; this interaction activates transcription factor NFE2L2/NRF2 by blocking its interaction with KEAP1. In terms of processing, non-enzymatic covalent modifications of reactive cysteines by electrophile metabolites inactivate the BCR(KEAP1) complex. Accumulation of fumarate promotes the formation of cysteine S-succination (S-(2-succinyl)cysteine), leading to inactivate the BCR(KEAP1) complex and promote NFE2L2/NRF2 nuclear accumulation and activation. Nitric oxide-dependent 8-Nitro-cGMP formation promotes cysteine guanylation (S-cGMP-cysteine), leading to NFE2L2/NRF2 nuclear accumulation and activation. Itaconate, an anti-inflammatory metabolite generated in response to lipopolysaccharide, alkylates cysteines, activating NFE2L2/NRF2. Methylglyoxal, a reactive metabolite that accumulates when the glycolytic enzyme PGK1 is inhibited, promotes formation of a methylimidazole cross-link between proximal Cys-151 and Arg-135 on another KEAP1 molecule, resulting in an inactive dimer that inactivates the BCR(KEAP1) complex. Degraded via a proteasomal-independent process during selective autophagy: interaction with phosphorylated SQSTM1/p62 sequesters KEAP1 in inclusion bodies, leading to its degradation. Post-translationally, auto-ubiquitinated by the BCR(KEAP1) complex. Quinone-induced oxidative stress, but not sulforaphane, increases its ubiquitination. Ubiquitination and subsequent degradation is most pronounced following prolonged exposure of cells to oxidative stress, particularly in glutathione-deficient cells that are highly susceptible to oxidative stress. Deubiquitinated by USP25; leading to stabilization. Ubiquitinated by TRIM25; leading to degradation upon ER stress. In terms of tissue distribution, broadly expressed, with highest levels in skeletal muscle.

It is found in the cytoplasm. Its subcellular location is the nucleus. It functions in the pathway protein modification; protein ubiquitination. With respect to regulation, ubiquitin ligase activity of the BCR(KEAP1) complex is inhibited by oxidative stress and electrophile metabolites such as sulforaphane. Electrophile metabolites react with reactive cysteine residues in KEAP1 and trigger non-enzymatic covalent modifications of these cysteine residues, leading to inactivate the ubiquitin ligase activity of the BCR(KEAP1) complex. Selective autophagy also inactivates the BCR(KEAP1) complex via interaction between KEAP1 and SQSTM1/p62, which sequesters the complex in inclusion bodies and promotes its degradation. In terms of biological role, substrate-specific adapter of a BCR (BTB-CUL3-RBX1) E3 ubiquitin ligase complex that regulates the response to oxidative stress by targeting NFE2L2/NRF2 for ubiquitination. KEAP1 acts as a key sensor of oxidative and electrophilic stress: in normal conditions, the BCR(KEAP1) complex mediates ubiquitination and degradation of NFE2L2/NRF2, a transcription factor regulating expression of many cytoprotective genes. In response to oxidative stress, different electrophile metabolites trigger non-enzymatic covalent modifications of highly reactive cysteine residues in KEAP1, leading to inactivate the ubiquitin ligase activity of the BCR(KEAP1) complex, promoting NFE2L2/NRF2 nuclear accumulation and expression of phase II detoxifying enzymes. In response to selective autophagy, KEAP1 is sequestered in inclusion bodies following its interaction with SQSTM1/p62, leading to inactivation of the BCR(KEAP1) complex and activation of NFE2L2/NRF2. The BCR(KEAP1) complex also mediates ubiquitination of SQSTM1/p62, increasing SQSTM1/p62 sequestering activity and degradation. The BCR(KEAP1) complex also targets BPTF and PGAM5 for ubiquitination and degradation by the proteasome. In Homo sapiens (Human), this protein is Kelch-like ECH-associated protein 1.